A 467-amino-acid chain; its full sequence is Ergochrome gene cluster transcriptional coactivator CPUR_05432 (467 aa).

The 71-residue stretch at 109–179 (IAIQCEMLGS…RRGYVAHTPL (71 aa)) folds into the HTH iclR-type domain. Residues 139 to 158 (IQDVANLSNVPEQQLAQMIG) constitute a DNA-binding region (H-T-H motif).

It localises to the nucleus. Its function is as follows. Transcriptional coactivator; part of the gene cluster responsible for the typical purple-black color of the ergot sclerotia. The ergochrome gene cluster produces several ergot pigments including the yellow ergochrome secalonic acid and its derivatives, as well as the red anthraquinones endocrocin and clavorubin. With CPUR_05433, coregulates the production of geodin. This Claviceps purpurea (strain 20.1) (Ergot fungus) protein is Ergochrome gene cluster transcriptional coactivator CPUR_05432.